The primary structure comprises 208 residues: Inner membrane-spanning protein YciB (208 aa).

5 consecutive transmembrane segments (helical) span residues 49–69, 78–98, 105–125, 150–170, and 178–198; these read APVLLATVVVIVATLAQILWL, TMLWVSLALVTALGSATIYFH, WKPTVLYWVMGASLLVGELVF, FSWVAFFAAMGCLNLWVAFNF, and FKLFGGMGLMLVFVLAQAFFL.

It belongs to the YciB family.

The protein localises to the cell inner membrane. Plays a role in cell envelope biogenesis, maintenance of cell envelope integrity and membrane homeostasis. This chain is Inner membrane-spanning protein YciB, found in Polaromonas naphthalenivorans (strain CJ2).